A 65-amino-acid polypeptide reads, in one-letter code: Large ribosomal subunit protein bL35 (65 aa).

Residues 1-23 form a disordered region; the sequence is MPKMKTHRGAAKRFKKTGTGKLK.

The protein belongs to the bacterial ribosomal protein bL35 family.

The polypeptide is Large ribosomal subunit protein bL35 (Clostridium perfringens (strain ATCC 13124 / DSM 756 / JCM 1290 / NCIMB 6125 / NCTC 8237 / Type A)).